Reading from the N-terminus, the 145-residue chain is Probable 4-amino-4-deoxy-L-arabinose-phosphoundecaprenol flippase subunit ArnF (145 aa).

The Cytoplasmic segment spans residues 1–3 (MAH). The helical transmembrane segment at 4–24 (LTLSIRGLLLALMSVLLISVA) threads the bilayer. Topologically, residues 25–61 (QLSMKWGMGTLNQLWSDLVMLWQGEDYSSLFSQALAP) are periplasmic. The helical transmembrane segment at 62–82 (VMAVGAGLFCYALSMACWVMA) threads the bilayer. The Cytoplasmic portion of the chain corresponds to 83–89 (LKRLPLS). The chain crosses the membrane as a helical span at residues 90 to 110 (IAYPLLSLSYVLVYLGAVYLP). The Periplasmic segment spans residues 111-114 (WLNE). A helical transmembrane segment spans residues 115–135 (PLSWVKGTGIFLILLGLIFVL). The Cytoplasmic segment spans residues 136–145 (PKKNQTSDKS).

This sequence belongs to the ArnF family. Heterodimer of ArnE and ArnF.

It localises to the cell inner membrane. Its pathway is bacterial outer membrane biogenesis; lipopolysaccharide biosynthesis. Functionally, translocates 4-amino-4-deoxy-L-arabinose-phosphoundecaprenol (alpha-L-Ara4N-phosphoundecaprenol) from the cytoplasmic to the periplasmic side of the inner membrane. The chain is Probable 4-amino-4-deoxy-L-arabinose-phosphoundecaprenol flippase subunit ArnF from Shewanella sediminis (strain HAW-EB3).